The primary structure comprises 451 residues: Probable asparagine--tRNA ligase, cytoplasmic (451 aa).

It belongs to the class-II aminoacyl-tRNA synthetase family.

The protein localises to the cytoplasm. It carries out the reaction tRNA(Asn) + L-asparagine + ATP = L-asparaginyl-tRNA(Asn) + AMP + diphosphate + H(+). The protein is Probable asparagine--tRNA ligase, cytoplasmic of Encephalitozoon cuniculi (strain GB-M1) (Microsporidian parasite).